A 378-amino-acid chain; its full sequence is Putative glutamate--cysteine ligase 2 (378 aa).

The protein belongs to the glutamate--cysteine ligase type 2 family. YbdK subfamily.

It carries out the reaction L-cysteine + L-glutamate + ATP = gamma-L-glutamyl-L-cysteine + ADP + phosphate + H(+). In terms of biological role, ATP-dependent carboxylate-amine ligase which exhibits weak glutamate--cysteine ligase activity. The polypeptide is Putative glutamate--cysteine ligase 2 (Pseudomonas paraeruginosa (strain DSM 24068 / PA7) (Pseudomonas aeruginosa (strain PA7))).